The following is a 239-amino-acid chain: tRNA (guanine-N(1)-)-methyltransferase (239 aa).

S-adenosyl-L-methionine is bound by residues G108 and 127-132 (LGDYVL).

This sequence belongs to the RNA methyltransferase TrmD family. Homodimer.

The protein resides in the cytoplasm. It catalyses the reaction guanosine(37) in tRNA + S-adenosyl-L-methionine = N(1)-methylguanosine(37) in tRNA + S-adenosyl-L-homocysteine + H(+). Functionally, specifically methylates guanosine-37 in various tRNAs. This chain is tRNA (guanine-N(1)-)-methyltransferase, found in Streptococcus pneumoniae (strain JJA).